We begin with the raw amino-acid sequence, 437 residues long: Probable receptor-like serine/threonine-protein kinase At4g34500 (437 aa).

Residues 25–45 (LVIAICSVFILLISLLIFLFV) form a helical membrane-spanning segment. One can recognise a Protein kinase domain in the interval 145–426 (FSDDNMIGEG…MLEAEDFPFR (282 aa)). Residues 151-159 (IGEGGYGVV) and Lys173 contribute to the ATP site. A Phosphotyrosine modification is found at Tyr220. Residue Asp273 is the Proton acceptor of the active site. At Ser277 the chain carries Phosphoserine. Phosphothreonine is present on residues Thr307 and Thr312. Phosphotyrosine is present on Tyr320.

It belongs to the protein kinase superfamily. Ser/Thr protein kinase family.

The protein resides in the cell membrane. The catalysed reaction is L-seryl-[protein] + ATP = O-phospho-L-seryl-[protein] + ADP + H(+). The enzyme catalyses L-threonyl-[protein] + ATP = O-phospho-L-threonyl-[protein] + ADP + H(+). The sequence is that of Probable receptor-like serine/threonine-protein kinase At4g34500 from Arabidopsis thaliana (Mouse-ear cress).